Reading from the N-terminus, the 192-residue chain is Fe/S biogenesis protein NfuA (192 aa).

The [4Fe-4S] cluster site is built by cysteine 149 and cysteine 152.

It belongs to the NfuA family. In terms of assembly, homodimer. It depends on [4Fe-4S] cluster as a cofactor.

Functionally, involved in iron-sulfur cluster biogenesis. Binds a 4Fe-4S cluster, can transfer this cluster to apoproteins, and thereby intervenes in the maturation of Fe/S proteins. Could also act as a scaffold/chaperone for damaged Fe/S proteins. This is Fe/S biogenesis protein NfuA from Shewanella loihica (strain ATCC BAA-1088 / PV-4).